The chain runs to 301 residues: GTP cyclohydrolase FolE2 (301 aa).

This sequence belongs to the GTP cyclohydrolase IV family.

The enzyme catalyses GTP + H2O = 7,8-dihydroneopterin 3'-triphosphate + formate + H(+). Its pathway is cofactor biosynthesis; 7,8-dihydroneopterin triphosphate biosynthesis; 7,8-dihydroneopterin triphosphate from GTP: step 1/1. Its function is as follows. Converts GTP to 7,8-dihydroneopterin triphosphate. The sequence is that of GTP cyclohydrolase FolE2 from Pseudomonas savastanoi pv. phaseolicola (strain 1448A / Race 6) (Pseudomonas syringae pv. phaseolicola (strain 1448A / Race 6)).